The chain runs to 363 residues: D-proline dehydrogenase (363 aa).

FAD is bound at residue 3–17 (VAIVGGGIIGLFTAY).

The protein belongs to the DadA oxidoreductase family. As to quaternary structure, homotetramer. FAD is required as a cofactor.

The protein localises to the cell membrane. It carries out the reaction D-proline + A = 1-pyrroline-2-carboxylate + AH2. Catalyzes the dehydrogenation of D-proline. Can also use other D-amino acids, but with lower efficiency. The sequence is that of D-proline dehydrogenase (dpdh) from Pyrobaculum islandicum (strain DSM 4184 / JCM 9189 / GEO3).